Consider the following 4910-residue polypeptide: Midasin (4910 aa).

AAA-ATPase protomer stretches follow at residues 305–528 and 636–975; these read IQNS…DILF and MEQI…TDII. Residues 315–322 and 653–660 contribute to the ATP site; these read GKAGSGKT and GETGTGKT. An interaction with RIX1 region spans residues 695–803; that stretch reads VNSKTVAVPI…KKFEAQSSSI (109 aa). A Phosphothreonine modification is found at Thr1026. 4 AAA-ATPase protomer regions span residues 1054–1280, 1345–1624, 1732–1985, and 2036–2286; these read HYII…WALR, KGMR…VEFI, RVVR…QLLI, and VYES…DELH. Residues 1083–1090, 1368–1375, 1747–1754, and 2054–2061 each bind ATP; these read GPTSSGKT, GETGCGKT, GSPGVGKT, and GPSNSGKT. Residues 2372–4075 are linker; it reads EVGKWANNVL…DGEGAQNNNK (1704 aa). A Phosphoserine modification is found at Ser2971. Disordered stretches follow at residues 4045 to 4547, 4555 to 4574, and 4579 to 4600; these read SPQP…EKMD, SDID…SGFI, and SEED…EDDS. A compositionally biased stretch (acidic residues) spans 4078–4088; the sequence is EQDEDLTEDAQ. Residues 4089–4098 are compositionally biased toward basic and acidic residues; that stretch reads NENKEQQDKD. Acidic residues predominate over residues 4099–4154; that stretch reads ERDDENEDDAVEMEGDMAGELEDLSNGEENDDEDTDSEEEELDEEIDDLNEDDPNA. Basic and acidic residues predominate over residues 4155-4174; it reads IDDKMWDDKASDNSKEKDTD. Acidic residues-rich tracts occupy residues 4202 to 4244, 4251 to 4274, and 4288 to 4358; these read GDED…EDLE, ETLD…DVDM, and GNED…EEEL. Residue Ser4353 is modified to Phosphoserine. The span at 4359–4372 shows a compositional bias: basic and acidic residues; it reads KQDAAMEENKEKGG. Thr4388 bears the Phosphothreonine mark. 2 stretches are compositionally biased toward basic and acidic residues: residues 4435–4447 and 4481–4495; these read DVTK…REEA and LEKN…EHVE. Residues 4498 to 4516 are compositionally biased toward polar residues; the sequence is NTETDTQALGSATQDQLQT. The span at 4517–4531 shows a compositional bias: acidic residues; sequence IDEDMAIDDDREEQE. Ser4555 carries the phosphoserine modification. Positions 4557-4570 are enriched in basic and acidic residues; that stretch reads IDAHDANNDVDSKK. A VWFA domain is found at 4704–4899; sequence QIMIALDDSK…SELPEMLSLI (196 aa).

The protein belongs to the midasin family. Associates with pre-60S ribosomes in the nucleoplasm. Interacts (via its hexameric AAA ATPase ring) with the RIX1 complex (via RIX1); this interaction is crucial for recruitment of MDN1 to the pre-ribosomal particle. Interacts (via VWFA/MIDAS domain) with YTM1 (via UBL domain). Interacts (via VWFA/MIDAS domain) with RSA4 (via UBL domain).

The protein resides in the nucleus. The protein localises to the nucleolus. It localises to the nucleoplasm. Its function is as follows. Nuclear chaperone required for maturation and nuclear export of pre-60S ribosome subunits. Functions at successive maturation steps to remove ribosomal factors at critical transition points, first driving the exit of early pre-60S particles from the nucleolus and then driving late pre-60S particles from the nucleus. At an early stage in 60S maturation, mediates the dissociation of the NOP7 complex (YTM1-ERB1-NOP7) from early pre-60S particles, rendering them competent for export from the nucleolus to the nucleoplasm. Subsequently recruited to the nucleoplasmic particles through interaction with the RIX1 complex. This binding is only possible if the 5S RNP at the central protuberance has undergone the rotation to complete its maturation. After remodeling, removes the ribosome biogenesis factor RSA4 in an ATP hydrolysis-driven step from pre-60S ribosomal subunits, rendering them competent for export from the nucleoplasm to the cytoplasm. Activates the GTPase activity of NOG2, which disengages from the pre-60S particle upon GTP hydrolysis, thus freeing its binding site for the nuclear export factor NMD3. The polypeptide is Midasin (MDN1) (Saccharomyces cerevisiae (strain ATCC 204508 / S288c) (Baker's yeast)).